A 227-amino-acid polypeptide reads, in one-letter code: PKHD-type hydroxylase ABSDF3031 (227 aa).

The Fe2OG dioxygenase domain occupies 78–178 (KIIPPLFNRY…RFASFFWVQS (101 aa)). 3 residues coordinate Fe cation: His-96, Asp-98, and His-159. Residue Arg-169 coordinates 2-oxoglutarate.

Fe(2+) is required as a cofactor. The cofactor is L-ascorbate.

The sequence is that of PKHD-type hydroxylase ABSDF3031 from Acinetobacter baumannii (strain SDF).